A 106-amino-acid chain; its full sequence is UPF0145 protein GSU2791 (106 aa).

The protein belongs to the UPF0145 family.

In Geobacter sulfurreducens (strain ATCC 51573 / DSM 12127 / PCA), this protein is UPF0145 protein GSU2791.